The primary structure comprises 390 residues: MRYITAGESHGPQLTVILEGVPAGLTLAAEHINKELLRRQKGHGRGRRMQIETDTVEIVSGVRHGMTLGSPITLIVKNDDFKHWTKVMGADPISEKESKEMKRTITKPRPGHADLNGAIKYGHRDIRNVLERSSARETTVRVAAGAVAKQILKELGVEIAGHVLEIGGVKAKHILNLSIEEIQIITENSPVRCLDKTVEQEMMDAIDNAKNSGDSIGGIVEVIAEGMPIGVGSYVHYDRKLDAKLAGAIMSINAFKGAEIGVGFEAARQPGSKVHDEILWDEEQGYTRKTNNAGGLEGGMTTGMPIVVRGVMKPIPTLYKPLASVDIDTKEAFQASIERSDSCAVPAAGVVAESVVAWELAHALVEQFGKDRMELIQQNITQHNKYAKEF.

Positions 39 and 45 each coordinate NADP(+). FMN-binding positions include 132 to 134 (RSS), 253 to 254 (NA), G298, 313 to 317 (KPIPT), and R339.

The protein belongs to the chorismate synthase family. In terms of assembly, homotetramer. Requires FMNH2 as cofactor.

The catalysed reaction is 5-O-(1-carboxyvinyl)-3-phosphoshikimate = chorismate + phosphate. It functions in the pathway metabolic intermediate biosynthesis; chorismate biosynthesis; chorismate from D-erythrose 4-phosphate and phosphoenolpyruvate: step 7/7. In terms of biological role, catalyzes the anti-1,4-elimination of the C-3 phosphate and the C-6 proR hydrogen from 5-enolpyruvylshikimate-3-phosphate (EPSP) to yield chorismate, which is the branch point compound that serves as the starting substrate for the three terminal pathways of aromatic amino acid biosynthesis. This reaction introduces a second double bond into the aromatic ring system. In Bacillus thuringiensis (strain Al Hakam), this protein is Chorismate synthase 2.